We begin with the raw amino-acid sequence, 360 residues long: Peptide chain release factor 1 (360 aa).

N5-methylglutamine is present on Gln-235. The disordered stretch occupies residues 285–305 (KRQEAEASERRNLLGSGDRSD).

This sequence belongs to the prokaryotic/mitochondrial release factor family. Post-translationally, methylated by PrmC. Methylation increases the termination efficiency of RF1.

Its subcellular location is the cytoplasm. In terms of biological role, peptide chain release factor 1 directs the termination of translation in response to the peptide chain termination codons UAG and UAA. The chain is Peptide chain release factor 1 from Proteus mirabilis (strain HI4320).